Reading from the N-terminus, the 192-residue chain is Cytochrome b-245 light chain (192 aa).

The Cytoplasmic segment spans residues 2–7; that stretch reads GQIEWA. The helical transmembrane segment at 8 to 30 threads the bilayer; it reads MWANEQALASGLILMTGGIVATA. At 31–35 the chain is on the extracellular side; that stretch reads GQFTQ. The chain crosses the membrane as a helical span at residues 36–53; the sequence is WYLGTYSIAAGVLVCLLE. The Cytoplasmic segment spans residues 54–69; that stretch reads YPRGRRTKGSTMERCE. An intramembrane segment occupies 70 to 80; it reads QKYMTKVVKAF. Residues 81–86 lie on the Cytoplasmic side of the membrane; sequence GPLSRN. A helical membrane pass occupies residues 87–104; it reads YYIRAFLHLGLSVPAGFL. L105 is a topological domain (extracellular). A helical transmembrane segment spans residues 106-126; the sequence is ATILGTACLAIASGIYLLAAI. Topologically, residues 127 to 192 are cytoplasmic; sequence RGEQWTPIEP…TPCPVTDEVV (66 aa). A disordered region spans residues 134–192; it reads IEPKPKERPQVGGTIKQPPSNPPPRPPPEARKKPGEEAVAGVPRGAPRKTPCPVTDEVV. The residue at position 147 (T147) is a Phosphothreonine. A Glycyl lysine isopeptide (Lys-Gly) (interchain with G-Cter in ubiquitin) cross-link involves residue K149.

This sequence belongs to the p22phox family. As to quaternary structure, component of the phagocyte NADPH oxidase core complex/cytochrome b558 complex, composed of CYBB (heavy chain (beta)) and CYBA (light chain (alpha)). Component of the phagocyte NADPH oxidase complex composed of an obligatory core heterodimer formed by the membrane proteins CYBA and CYBB and the cytosolic regulatory subunits NCF1/p47-phox, NCF2/p67-phox, NCF4/p40-phox and the small GTPase RAC1 or RAC2. Interacts with NCF1 (via SH3 domain). Interacts with SH3PXD2A. Interacts with DUOX1, DUOX2 and TPO. Interacts with NOX4; this interaction mediates superoxide generation. Interacts with calprotectin (S100A8/9). Interacts with GBP7. Interacts with NOXO1. Forms a heterodimer with NOX3 and is essential for activity and cell membrane localization of NOX3. Interacts with NOX1. Phosphorylation at Thr-147 enhances NADPH oxidase activity by promoting NCF1/p47-phox binding. In terms of processing, ubiquitinated at Lys-149 likely by RNF145.

The protein localises to the cell membrane. Functionally, subunit of NADPH oxidase complexes that is required for the NADPH oxidase activity that generates, in various cell types, superoxide from molecular oxygen utilizing NADPH as an electron donor. Subunit of the phagocyte NADPH oxidase complex that mediates the transfer of electrons from cytosolic NADPH to O2 to produce the superoxide anion (O2(-)). In the activated complex, electrons are first transferred from NADPH to flavin adenine dinucleotide (FAD) and subsequently transferred via two heme molecules to molecular oxygen, producing superoxide through an outer-sphere reaction. Activation of the NADPH oxidase complex is initiated by the assembly of cytosolic subunits of the NADPH oxidase complex with the core NADPH oxidase complex to form a complex at the plasma membrane or phagosomal membrane. This activation process is initiated by phosphorylation dependent binding of the cytosolic NCF1/p47-phox subunit to the C-terminus of CYBA/p22-phox. Aassociates with NOX3 to form a functional NADPH oxidase constitutively generating superoxide. This is Cytochrome b-245 light chain from Sus scrofa (Pig).